A 412-amino-acid chain; its full sequence is Maintenance of mitochondrial morphology protein 1 (412 aa).

Residues 1–19 lie on the Lumenal side of the membrane; it reads MAQDVCPTRSEPSLSFLQG. The helical transmembrane segment at 20 to 40 threads the bilayer; that stretch reads LILGQLSVVLLIAAFIKFFIF. Over 41 to 412 the chain is Cytoplasmic; that stretch reads GEAPSAEETA…GSLPGIDMPT (372 aa). Residues 121-337 enclose the SMP-LTD domain; it reads QPESLDWFNV…EPRFQEIELP (217 aa). Positions 372–384 are enriched in basic and acidic residues; the sequence is ARQELDTETDGLR. The interval 372–412 is disordered; that stretch reads ARQELDTETDGLRYRRRPVGDDTYSVSGSMPGSLPGIDMPT.

Belongs to the MMM1 family. Homodimer. Component of the ER-mitochondria encounter structure (ERMES) or MDM complex, composed of MMM1, MDM10, MDM12 and MDM34. An MMM1 homodimer associates with one molecule of MDM12 on each side in a pairwise head-to-tail manner, and the SMP-LTD domains of MMM1 and MDM12 generate a continuous hydrophobic tunnel for phospholipid trafficking.

Its subcellular location is the endoplasmic reticulum membrane. Its function is as follows. Component of the ERMES/MDM complex, which serves as a molecular tether to connect the endoplasmic reticulum (ER) and mitochondria. Components of this complex are involved in the control of mitochondrial shape and protein biogenesis, and function in nonvesicular lipid trafficking between the ER and mitochondria. The MDM12-MMM1 subcomplex functions in the major beta-barrel assembly pathway that is responsible for biogenesis of all outer membrane beta-barrel proteins, and acts in a late step after the SAM complex. The MDM10-MDM12-MMM1 subcomplex further acts in the TOM40-specific pathway after the action of the MDM12-MMM1 complex. Essential for establishing and maintaining the structure of mitochondria and maintenance of mtDNA nucleoids. In Podospora anserina (strain S / ATCC MYA-4624 / DSM 980 / FGSC 10383) (Pleurage anserina), this protein is Maintenance of mitochondrial morphology protein 1.